A 518-amino-acid chain; its full sequence is ATP synthase subunit alpha (518 aa).

G169 to T176 serves as a coordination point for ATP.

It belongs to the ATPase alpha/beta chains family. In terms of assembly, F-type ATPases have 2 components, CF(1) - the catalytic core - and CF(0) - the membrane proton channel. CF(1) has five subunits: alpha(3), beta(3), gamma(1), delta(1), epsilon(1). CF(0) has three main subunits: a(1), b(2) and c(9-12). The alpha and beta chains form an alternating ring which encloses part of the gamma chain. CF(1) is attached to CF(0) by a central stalk formed by the gamma and epsilon chains, while a peripheral stalk is formed by the delta and b chains.

Its subcellular location is the cell membrane. It carries out the reaction ATP + H2O + 4 H(+)(in) = ADP + phosphate + 5 H(+)(out). Its function is as follows. Produces ATP from ADP in the presence of a proton gradient across the membrane. The alpha chain is a regulatory subunit. The polypeptide is ATP synthase subunit alpha (Enterococcus faecalis (strain ATCC 700802 / V583)).